Consider the following 413-residue polypeptide: UPF0754 membrane protein PCC7424_0748 (413 aa).

The next 2 helical transmembrane spans lie at 3–23 (IALE…GAII) and 391–411 (IVNL…VILL).

Belongs to the UPF0754 family.

The protein localises to the cell inner membrane. This Gloeothece citriformis (strain PCC 7424) (Cyanothece sp. (strain PCC 7424)) protein is UPF0754 membrane protein PCC7424_0748.